The primary structure comprises 550 residues: CTP synthase (550 aa).

An amidoligase domain region spans residues Met-1–Leu-265. Ser-13 lines the CTP pocket. Ser-13 serves as a coordination point for UTP. Ser-14 to Ile-19 lines the ATP pocket. Tyr-54 is a binding site for L-glutamine. Asp-71 is an ATP binding site. Asp-71 and Glu-139 together coordinate Mg(2+). Residues Asp-146–Glu-148, Lys-186–Gln-191, and Lys-222 contribute to the CTP site. UTP-binding positions include Lys-186 to Gln-191 and Lys-222. In terms of domain architecture, Glutamine amidotransferase type-1 spans Thr-290–Arg-541. An L-glutamine-binding site is contributed by Gly-351. Catalysis depends on Cys-378, which acts as the Nucleophile; for glutamine hydrolysis. L-glutamine is bound by residues Leu-379 to Gln-382, Glu-402, and Arg-469. Catalysis depends on residues His-514 and Glu-516.

Belongs to the CTP synthase family. Homotetramer.

It catalyses the reaction UTP + L-glutamine + ATP + H2O = CTP + L-glutamate + ADP + phosphate + 2 H(+). It carries out the reaction L-glutamine + H2O = L-glutamate + NH4(+). The enzyme catalyses UTP + NH4(+) + ATP = CTP + ADP + phosphate + 2 H(+). Its pathway is pyrimidine metabolism; CTP biosynthesis via de novo pathway; CTP from UDP: step 2/2. Allosterically activated by GTP, when glutamine is the substrate; GTP has no effect on the reaction when ammonia is the substrate. The allosteric effector GTP functions by stabilizing the protein conformation that binds the tetrahedral intermediate(s) formed during glutamine hydrolysis. Inhibited by the product CTP, via allosteric rather than competitive inhibition. Functionally, catalyzes the ATP-dependent amination of UTP to CTP with either L-glutamine or ammonia as the source of nitrogen. Regulates intracellular CTP levels through interactions with the four ribonucleotide triphosphates. The polypeptide is CTP synthase (Nitrosococcus oceani (strain ATCC 19707 / BCRC 17464 / JCM 30415 / NCIMB 11848 / C-107)).